A 438-amino-acid polypeptide reads, in one-letter code: Glutamate-1-semialdehyde 2,1-aminomutase (438 aa).

Lysine 272 bears the N6-(pyridoxal phosphate)lysine mark.

It belongs to the class-III pyridoxal-phosphate-dependent aminotransferase family. HemL subfamily. In terms of assembly, homodimer. Pyridoxal 5'-phosphate is required as a cofactor.

The protein localises to the cytoplasm. It carries out the reaction (S)-4-amino-5-oxopentanoate = 5-aminolevulinate. The protein operates within porphyrin-containing compound metabolism; protoporphyrin-IX biosynthesis; 5-aminolevulinate from L-glutamyl-tRNA(Glu): step 2/2. Its pathway is porphyrin-containing compound metabolism; chlorophyll biosynthesis. The chain is Glutamate-1-semialdehyde 2,1-aminomutase from Chloroflexus aggregans (strain MD-66 / DSM 9485).